We begin with the raw amino-acid sequence, 130 residues long: Small ribosomal subunit protein uS9 (130 aa).

Positions 106 to 130 (RDSRKVERKKPGLKKARKASQFSKR) are disordered. Over residues 111–130 (VERKKPGLKKARKASQFSKR) the composition is skewed to basic residues.

This sequence belongs to the universal ribosomal protein uS9 family.

The chain is Small ribosomal subunit protein uS9 from Streptococcus pneumoniae (strain ATCC 700669 / Spain 23F-1).